Here is an 89-residue protein sequence, read N- to C-terminus: Small ribosomal subunit protein uS15 (89 aa).

Residues 1-10 (MAVTTDQKSQ) are compositionally biased toward polar residues. The tract at residues 1–22 (MAVTTDQKSQVMRDYQRAAGDT) is disordered.

Belongs to the universal ribosomal protein uS15 family. In terms of assembly, part of the 30S ribosomal subunit. Forms a bridge to the 50S subunit in the 70S ribosome, contacting the 23S rRNA.

One of the primary rRNA binding proteins, it binds directly to 16S rRNA where it helps nucleate assembly of the platform of the 30S subunit by binding and bridging several RNA helices of the 16S rRNA. In terms of biological role, forms an intersubunit bridge (bridge B4) with the 23S rRNA of the 50S subunit in the ribosome. This chain is Small ribosomal subunit protein uS15, found in Nitrosomonas europaea (strain ATCC 19718 / CIP 103999 / KCTC 2705 / NBRC 14298).